Reading from the N-terminus, the 267-residue chain is tRNA pseudouridine synthase A (267 aa).

The Nucleophile role is filled by Asp52. Tyr113 contacts substrate.

Belongs to the tRNA pseudouridine synthase TruA family. In terms of assembly, homodimer.

The catalysed reaction is uridine(38/39/40) in tRNA = pseudouridine(38/39/40) in tRNA. In terms of biological role, formation of pseudouridine at positions 38, 39 and 40 in the anticodon stem and loop of transfer RNAs. The chain is tRNA pseudouridine synthase A from Chlamydia pneumoniae (Chlamydophila pneumoniae).